The chain runs to 70 residues: Sec-independent protein translocase protein TatA (70 aa).

Residues Met-1–Gly-21 form a helical membrane-spanning segment. Residues Gly-42 to Lys-70 are disordered. Residues Thr-61–Lys-70 are compositionally biased toward basic and acidic residues.

It belongs to the TatA/E family. In terms of assembly, the Tat system comprises two distinct complexes: a TatABC complex, containing multiple copies of TatA, TatB and TatC subunits, and a separate TatA complex, containing only TatA subunits. Substrates initially bind to the TatABC complex, which probably triggers association of the separate TatA complex to form the active translocon.

Its subcellular location is the cell inner membrane. Its function is as follows. Part of the twin-arginine translocation (Tat) system that transports large folded proteins containing a characteristic twin-arginine motif in their signal peptide across membranes. TatA could form the protein-conducting channel of the Tat system. This Agrobacterium fabrum (strain C58 / ATCC 33970) (Agrobacterium tumefaciens (strain C58)) protein is Sec-independent protein translocase protein TatA.